Reading from the N-terminus, the 253-residue chain is Snake venom serine protease homolog HS120 (253 aa).

An N-terminal signal peptide occupies residues 1-18 (MVLIRVIANLLILQLSYA). The propeptide occupies 19 to 24 (QKSSEL). One can recognise a Peptidase S1 domain in the interval 25-244 (VIGGDECNIN…YLPWIQSIIA (220 aa)). 6 cysteine pairs are disulfide-bonded: Cys-31-Cys-158, Cys-49-Cys-65, Cys-98-Cys-251, Cys-137-Cys-205, Cys-169-Cys-184, and Cys-195-Cys-220. Asn-116 and Asn-165 each carry an N-linked (GlcNAc...) asparagine glycan.

This sequence belongs to the peptidase S1 family. Snake venom subfamily. As to expression, expressed by the venom gland.

The protein resides in the secreted. Its function is as follows. Snake venom serine protease homolog that may act in the hemostasis system of the prey. In Bothrops jararaca (Jararaca), this protein is Snake venom serine protease homolog HS120.